The primary structure comprises 639 residues: Transcription factor phomR' (639 aa).

Positions 14 to 41 (CWTCRLRRKKCNEGGPPCDNCEARGIHC) form a DNA-binding region, zn(2)-C6 fungal-type. Disordered stretches follow at residues 58 to 136 (REEA…AGTG) and 476 to 499 (LPRS…TGPE). Over residues 68 to 108 (SGRGRSYSRSSSTAAAAAPKPAEGAMVTGGSSSSSRGSGSS) the composition is skewed to low complexity.

The protein resides in the nucleus. Transcription factor; part of the gene cluster that mediates the biosynthesis of the phomopsins, a group of hexapeptide mycotoxins which infects lupins and causes lupinosis disease in livestock. May play a role in the regulation of the production of phomopsins. This Diaporthe leptostromiformis (Lupinosis disease fungus) protein is Transcription factor phomR'.